The sequence spans 374 residues: MKTVGYAIVGTGYFGAELGRIMKEQEGARIVAVLDPENGQTIAEELDCDVETDLDTLYSREDVEAVIVATPNYLHKEPVIKAAEHGVNVFCEKPIALSYQDCDEMVRTCQEHGVIFMAGHVMNFFHGVRYAKKLINDGVIGKVLYCHSARNGWEEQQPTISWKKIREKSGGHLYHHIHELDCVQFLMGGMPEEVTMTGGNVAHQGEAFGDEDDMLFVNMQFSDNRYAVLEWGSAFHWPEHYVLIQGTKGAIKIDMCDCGGTLKVDGREEHFLVHESQEEDDDRTRIYHGTEMDGAIMYGKPGKKPPMWLHSIMKNEMKYLNGILHGKEVDDEFRPLLTGEAARAAIATADACTKSRFEDRKVKLSEIIGEGSTI.

NAD(+) contacts are provided by Tyr-13, Phe-14, Asp-35, Asn-38, Thr-70, Asn-72, His-75, Glu-92, Lys-93, Trp-162, and Lys-163.

It belongs to the Gfo/Idh/MocA family. In terms of assembly, homodimer. NAD(+) serves as cofactor.

The catalysed reaction is N-acetyl-2,7-anhydro-alpha-neuraminate + H2O = N-acetyl-alpha-neuraminate. Its activity is regulated as follows. Neu5Ac is produced in the presence of NAD(+) or NADH, but not in the presence of FAD. Its function is as follows. Hydratase involved in the degradation of sialic acids, which are present in the host mucus layer and represent a much-coveted source of nutrients for R.gnavus, a prevalent member of the normal gut microbiota. Catalyzes the reversible conversion of the dehydrated form of N-acetylneuraminate (Neu5Ac), 2,7-anhydro-N-acetylneuraminate (2,7-AN), to Neu5Ac, allowing growth on 2,7-AN produced by the IT-sialidase NanH. Acts through a multistep mechanism involving a keto intermediate and cycling of NADH/NAD(+). The polypeptide is 2,7-anhydro-N-acetylneuraminate hydratase (Mediterraneibacter gnavus (strain ATCC 29149 / DSM 114966 / JCM 6515 / VPI C7-9) (Ruminococcus gnavus)).